The chain runs to 314 residues: Nodulation protein D 1 (314 aa).

The HTH lysR-type domain maps to leucine 6–threonine 63. Positions leucine 23 to alanine 42 form a DNA-binding region, H-T-H motif.

This sequence belongs to the LysR transcriptional regulatory family.

Functionally, nodD regulates the expression of the nodABCFE genes which encode other nodulation proteins. NodD is also a negative regulator of its own expression. Binds flavenoids as inducers. This is Nodulation protein D 1 (nodD1) from Mesorhizobium japonicum (strain LMG 29417 / CECT 9101 / MAFF 303099) (Mesorhizobium loti (strain MAFF 303099)).